A 349-amino-acid polypeptide reads, in one-letter code: DENN domain-containing protein 10 (349 aa).

Residues 1–135 enclose the uDENN domain; that stretch reads MATPELMLSL…TKGICQSDEN (135 aa). A cDENN domain is found at 160–294; sequence QFGMETIILY…ADRSDAQVIK (135 aa). A dDENN domain is found at 296–349; that stretch reads ISVKTKEILSNLMSLADHADNSKLTLECLKQGHYPPATENFLFHLAAAEQLLKI.

This sequence belongs to the DENND10 family.

The protein localises to the late endosome. Guanine nucleotide exchange factor (GEF) which may be involved in the regulation of late endocytic pathway homeostasis, including endosomal positioning, maturation and secretion. The sequence is that of DENN domain-containing protein 10 (dennd10) from Danio rerio (Zebrafish).